A 166-amino-acid polypeptide reads, in one-letter code: Large ribosomal subunit protein uL10 (166 aa).

Belongs to the universal ribosomal protein uL10 family. Part of the ribosomal stalk of the 50S ribosomal subunit. The N-terminus interacts with L11 and the large rRNA to form the base of the stalk. The C-terminus forms an elongated spine to which L12 dimers bind in a sequential fashion forming a multimeric L10(L12)X complex.

In terms of biological role, forms part of the ribosomal stalk, playing a central role in the interaction of the ribosome with GTP-bound translation factors. This Streptococcus sanguinis (strain SK36) protein is Large ribosomal subunit protein uL10.